Reading from the N-terminus, the 360-residue chain is MKPSIVAKLEALHERHEEVQALLGDAQTIADQERFRALSREYAQLSDVSRCFTDWQQVQEDIETAQMMLDDPEMREMAQDELREAKEKSEQLEQQLQVLLLPKDPDDERNAFLEVRAGTGGDEAALFAGDLFRMYSRYAEARRWRVEIMSASEGEHGGYKEIIAKISGDGVYGRLKFESGGHRVQRVPATESQGRIHTSACTVAVMPELPDAELPDINPADLRIDTFRSSGAGGQHVNTTDSAIRITHLPTGIVVECQDERSQHKNKAKALSVLGARIHAAEMAKRQQAEASTRRNLLGSGDRSDRNRTYNFPQGRVTDHRINLTLYRLDEVMEGKLDMLIEPIIQEHQADQLAALSEQE.

Q235 carries the N5-methylglutamine modification. The disordered stretch occupies residues 284–313; sequence AKRQQAEASTRRNLLGSGDRSDRNRTYNFP.

Belongs to the prokaryotic/mitochondrial release factor family. In terms of processing, methylated by PrmC. Methylation increases the termination efficiency of RF1.

The protein resides in the cytoplasm. Peptide chain release factor 1 directs the termination of translation in response to the peptide chain termination codons UAG and UAA. The protein is Peptide chain release factor 1 of Escherichia coli (strain UTI89 / UPEC).